The sequence spans 408 residues: Menaquinone reductase (408 aa).

FAD-binding positions include 13-17 (GAGPA), 46-49 (CGDG), arginine 103, alanine 127, aspartate 290, and 302-303 (GI).

This sequence belongs to the geranylgeranyl reductase family. Requires FAD as cofactor.

It catalyses the reaction menaquinone-9 + AH2 = beta-dihydromenaquinone-9 + A. The protein operates within quinol/quinone metabolism; menaquinone biosynthesis. In terms of biological role, catalyzes the reduction of a single double bond in the isoprenoid tail of menaquinone (MK-9) in M.tuberculosis, likely the beta-isoprene unit, forming the predominant form of menaquinone found in mycobacteria, MK-9(II-H2). This Mycobacterium tuberculosis (strain CDC 1551 / Oshkosh) protein is Menaquinone reductase.